A 137-amino-acid chain; its full sequence is Protein PsiE homolog (137 aa).

Helical transmembrane passes span 15-35 (LRIT…AFLI), 55-75 (YYMT…ALIV), 82-102 (FHFP…RFII), and 108-128 (ATST…LFLA).

It belongs to the PsiE family.

The protein localises to the cell membrane. In Listeria innocua serovar 6a (strain ATCC BAA-680 / CLIP 11262), this protein is Protein PsiE homolog.